A 334-amino-acid polypeptide reads, in one-letter code: Trans-3-hydroxy-L-proline dehydratase (334 aa).

C91 functions as the Proton acceptor in the catalytic mechanism. Residues 92–93, D250, and 255–256 each bind substrate; these read GH and GT.

It belongs to the proline racemase family.

The enzyme catalyses trans-3-hydroxy-L-proline = 1-pyrroline-2-carboxylate + H2O. Its function is as follows. Catalyzes the dehydration of trans-3-hydroxy-L-proline (t3LHyp) to Delta(1)-pyrroline-2-carboxylate (Pyr2C). Is likely involved in a degradation pathway that converts t3LHyp to L-proline. Can also catalyze the epimerization of trans-4-hydroxy-L-proline (t4LHyp) to cis-4-hydroxy-D-proline (c4DHyp) in vitro. Displays no proline racemase activity. The sequence is that of Trans-3-hydroxy-L-proline dehydratase from Bacillus thuringiensis subsp. konkukian (strain 97-27).